The following is a 408-amino-acid chain: MHQFEEELTCSICYSLFEDPRVLPCSHTFCRSCLEGVIQLSSNFSIWRPLRVPLKCPNCRSIVEIPASGTESLPINFALKAIIEKYRQEDHSDVATCSEHYRQPLNVYCLLDKKLVCGHCLTIGKHNGHPIDDLHSAYLKEKESSGKILEQLTDKHWSDVCLLIEKLKEQKAQCESIVQDDKKVVVQYFKKLSETLEHKKQVLLAALDEINRQILEEYEPHIEKLKKIREEQLELMSLNTSIQKEESPLVFLEKVDNVHQRIKALKEKELPDVKPVEVYPRVGHLLKDVWSKTEIGQINKILTPKIKLVPKRKLHSKNSEKERGKPEELLQAANPLSVTFIFTVIIAIAVLSFHKPISSVVIESIPTHISDFFGFLYQDFCTCMQNTVDVVCHKLNSLAEFLGGIVPF.

The RING-type zinc finger occupies 10–60 (CSICYSLFEDPRVLPCSHTFCRSCLEGVIQLSSNFSIWRPLRVPLKCPNCR). The segment at 92 to 134 (SDVATCSEHYRQPLNVYCLLDKKLVCGHCLTIGKHNGHPIDDL) adopts a B box-type zinc-finger fold. Zn(2+) is bound by residues C97, H100, C120, and H126. Residues 163-247 (LIEKLKEQKA…LNTSIQKEES (85 aa)) adopt a coiled-coil conformation. The helical transmembrane segment at 333–353 (ANPLSVTFIFTVIIAIAVLSF) threads the bilayer.

Belongs to the TRIM/RBCC family. In terms of assembly, interacts with ECSIT.

The protein localises to the endoplasmic reticulum membrane. May serve as a multifunctional regulator for innate immune signaling pathways. This Gallus gallus (Chicken) protein is Tripartite motif-containing protein 59 (TRIM59).